The chain runs to 113 residues: Large ribosomal subunit protein uL22 (113 aa).

The protein belongs to the universal ribosomal protein uL22 family. In terms of assembly, part of the 50S ribosomal subunit.

Its function is as follows. This protein binds specifically to 23S rRNA; its binding is stimulated by other ribosomal proteins, e.g. L4, L17, and L20. It is important during the early stages of 50S assembly. It makes multiple contacts with different domains of the 23S rRNA in the assembled 50S subunit and ribosome. Functionally, the globular domain of the protein is located near the polypeptide exit tunnel on the outside of the subunit, while an extended beta-hairpin is found that lines the wall of the exit tunnel in the center of the 70S ribosome. This is Large ribosomal subunit protein uL22 from Roseiflexus castenholzii (strain DSM 13941 / HLO8).